A 160-amino-acid polypeptide reads, in one-letter code: MSEAKKYVMTYEGVKKLEEELEFLKTVKRKEITEKIKVALSFGDLSENSEYDEAKNEQAFVEGRIIQLENMLKNASIVDENEVPKDIVSVGSIVKVKDYEFDEEVEYIIVGSAEADPMNNKISNESPVGHGLIGKKVGDIIEVTVPDGVSKYEILEVNRA.

Positions 12 to 76 (EGVKKLEEEL…QLENMLKNAS (65 aa)) form a coiled coil.

Belongs to the GreA/GreB family.

In terms of biological role, necessary for efficient RNA polymerase transcription elongation past template-encoded arresting sites. The arresting sites in DNA have the property of trapping a certain fraction of elongating RNA polymerases that pass through, resulting in locked ternary complexes. Cleavage of the nascent transcript by cleavage factors such as GreA or GreB allows the resumption of elongation from the new 3'terminus. GreA releases sequences of 2 to 3 nucleotides. The protein is Transcription elongation factor GreA of Clostridium botulinum (strain Kyoto / Type A2).